A 283-amino-acid polypeptide reads, in one-letter code: MPVKKIVNRSNSGIHHKISIDYSKVLTTNTPQKSLLAKKKKNSGRNNQGKITVRHRGGGSKRKYRIIDFKRNLHDDKIALVKSIEYDPNRSAFISLIAYENGYRSYILTPQGIKVGDKVVSSSQAIDIKVGNCMPLEFIPEGTMVHNIEMTPGKGAQIARSAGAYAQILGKDDTGKYINLKLGSKEVRKFLKNCRAVVGIASNVDHNLVLLGKAGTTRHKGIRPTVRGSAMNPNDHPHGGGEGRSPVGRDAPRTPWGKRHMGVKTRNNKKSSTQLIIRRRNSK.

Disordered stretches follow at residues 37–59 (AKKK…RGGG) and 219–283 (HKGI…RNSK). Residues 256-269 (WGKRHMGVKTRNNK) are compositionally biased toward basic residues.

The protein belongs to the universal ribosomal protein uL2 family. In terms of assembly, part of the 50S ribosomal subunit. Forms a bridge to the 30S subunit in the 70S ribosome.

Its function is as follows. One of the primary rRNA binding proteins. Required for association of the 30S and 50S subunits to form the 70S ribosome, for tRNA binding and peptide bond formation. It has been suggested to have peptidyltransferase activity; this is somewhat controversial. Makes several contacts with the 16S rRNA in the 70S ribosome. This is Large ribosomal subunit protein uL2 from Mycoplasmoides gallisepticum (strain R(low / passage 15 / clone 2)) (Mycoplasma gallisepticum).